We begin with the raw amino-acid sequence, 279 residues long: Ribosomal RNA small subunit methyltransferase A (279 aa).

Positions 42, 67, 88, 113, and 129 each coordinate S-adenosyl-L-methionine.

It belongs to the class I-like SAM-binding methyltransferase superfamily. rRNA adenine N(6)-methyltransferase family. RsmA subfamily.

The protein resides in the cytoplasm. It carries out the reaction adenosine(1518)/adenosine(1519) in 16S rRNA + 4 S-adenosyl-L-methionine = N(6)-dimethyladenosine(1518)/N(6)-dimethyladenosine(1519) in 16S rRNA + 4 S-adenosyl-L-homocysteine + 4 H(+). In terms of biological role, specifically dimethylates two adjacent adenosines (A1518 and A1519) in the loop of a conserved hairpin near the 3'-end of 16S rRNA in the 30S particle. May play a critical role in biogenesis of 30S subunits. The polypeptide is Ribosomal RNA small subunit methyltransferase A (Thermotoga maritima (strain ATCC 43589 / DSM 3109 / JCM 10099 / NBRC 100826 / MSB8)).